A 303-amino-acid chain; its full sequence is N-acetylmuramic acid 6-phosphate etherase (303 aa).

Residues 60-223 (ATASLQAGGR…STGVMVKLGK (164 aa)) form the SIS domain. Glutamate 88 (proton donor) is an active-site residue. Residue glutamate 119 is part of the active site.

It belongs to the GCKR-like family. MurNAc-6-P etherase subfamily. Homodimer.

The catalysed reaction is N-acetyl-D-muramate 6-phosphate + H2O = N-acetyl-D-glucosamine 6-phosphate + (R)-lactate. It participates in amino-sugar metabolism; 1,6-anhydro-N-acetylmuramate degradation. It functions in the pathway amino-sugar metabolism; N-acetylmuramate degradation. The protein operates within cell wall biogenesis; peptidoglycan recycling. Functionally, specifically catalyzes the cleavage of the D-lactyl ether substituent of MurNAc 6-phosphate, producing GlcNAc 6-phosphate and D-lactate. Together with AnmK, is also required for the utilization of anhydro-N-acetylmuramic acid (anhMurNAc) either imported from the medium or derived from its own cell wall murein, and thus plays a role in cell wall recycling. The chain is N-acetylmuramic acid 6-phosphate etherase from Pectobacterium atrosepticum (strain SCRI 1043 / ATCC BAA-672) (Erwinia carotovora subsp. atroseptica).